The sequence spans 101 residues: DNA-binding protein Fis (101 aa).

Residues Gln77–Lys96 constitute a DNA-binding region (H-T-H motif).

Belongs to the transcriptional regulatory Fis family. Homodimer.

Its function is as follows. Activates ribosomal RNA transcription. Plays a direct role in upstream activation of rRNA promoters. The protein is DNA-binding protein Fis of Shewanella pealeana (strain ATCC 700345 / ANG-SQ1).